Here is a 921-residue protein sequence, read N- to C-terminus: AdoMet-dependent rRNA methyltransferase SPB1 (921 aa).

Glycine 58, tryptophan 60, aspartate 78, aspartate 94, and aspartate 119 together coordinate S-adenosyl-L-methionine. Lysine 159 (proton acceptor) is an active-site residue. The stretch at valine 367–threonine 414 forms a coiled coil. Disordered regions lie at residues alanine 448–threonine 476, glutamate 491–leucine 604, glutamate 635–lysine 713, leucine 814–lysine 835, and arginine 866–asparagine 921. A compositionally biased stretch (basic and acidic residues) spans glutamate 491–lysine 522. Acidic residues-rich tracts occupy residues aspartate 523–glycine 542, glutamate 555–glutamate 568, glutamate 635–glutamate 684, and aspartate 697–glutamate 708. A coiled-coil region spans residues isoleucine 796–lysine 835. The span at leucine 814 to threonine 823 shows a compositional bias: basic and acidic residues. Positions leucine 868 to tyrosine 879 are enriched in basic residues. Over residues lysine 880 to alanine 892 the composition is skewed to basic and acidic residues.

It belongs to the class I-like SAM-binding methyltransferase superfamily. RNA methyltransferase RlmE family. SPB1 subfamily. Component of the nucleolar and nucleoplasmic pre-60S ribosomal particle.

It is found in the nucleus. It localises to the nucleolus. It carries out the reaction a ribonucleotide in rRNA + S-adenosyl-L-methionine = a 2'-O-methylribonucleotide in rRNA + S-adenosyl-L-homocysteine + H(+). Required for proper assembly of pre-ribosomal particles during the biogenesis of the 60S ribosomal subunit. This is AdoMet-dependent rRNA methyltransferase SPB1 from Mycosarcoma maydis (Corn smut fungus).